A 229-amino-acid chain; its full sequence is Uracil-DNA glycosylase (229 aa).

The active-site Proton acceptor is Asp72.

Belongs to the uracil-DNA glycosylase (UDG) superfamily. UNG family.

Its subcellular location is the cytoplasm. It carries out the reaction Hydrolyzes single-stranded DNA or mismatched double-stranded DNA and polynucleotides, releasing free uracil.. Functionally, excises uracil residues from the DNA which can arise as a result of misincorporation of dUMP residues by DNA polymerase or due to deamination of cytosine. The protein is Uracil-DNA glycosylase of Dichelobacter nodosus (strain VCS1703A).